A 254-amino-acid polypeptide reads, in one-letter code: Small ribosomal subunit protein uS3 (254 aa).

Residues 39-109 (IRNYISARLK…EVKIDVIEVI (71 aa)) form the KH type-2 domain. Residues 220–254 (EEMKKMQERRNDSRGRGRGDGRGAKRRRRPAAKKA) are disordered. The span at 221–242 (EMKKMQERRNDSRGRGRGDGRG) shows a compositional bias: basic and acidic residues. The span at 243–254 (AKRRRRPAAKKA) shows a compositional bias: basic residues.

The protein belongs to the universal ribosomal protein uS3 family. In terms of assembly, part of the 30S ribosomal subunit. Forms a tight complex with proteins S10 and S14.

Its function is as follows. Binds the lower part of the 30S subunit head. Binds mRNA in the 70S ribosome, positioning it for translation. This Chlorobaculum parvum (strain DSM 263 / NCIMB 8327) (Chlorobium vibrioforme subsp. thiosulfatophilum) protein is Small ribosomal subunit protein uS3.